A 201-amino-acid chain; its full sequence is Small ribosomal subunit protein uS4c (201 aa).

The S4 RNA-binding domain maps to 89 to 150 (MRLDNIVFRL…RQKSQAIITK (62 aa)).

This sequence belongs to the universal ribosomal protein uS4 family. Part of the 30S ribosomal subunit. Contacts protein S5. The interaction surface between S4 and S5 is involved in control of translational fidelity.

Its subcellular location is the plastid. The protein localises to the chloroplast. Its function is as follows. One of the primary rRNA binding proteins, it binds directly to 16S rRNA where it nucleates assembly of the body of the 30S subunit. In terms of biological role, with S5 and S12 plays an important role in translational accuracy. In Physcomitrium patens (Spreading-leaved earth moss), this protein is Small ribosomal subunit protein uS4c (rps4).